The chain runs to 598 residues: Sulfoacetaldehyde acetyltransferase (598 aa).

It belongs to the TPP enzyme family. Homotetramer. The cofactor is Mg(2+). Requires thiamine diphosphate as cofactor.

It is found in the cytoplasm. It carries out the reaction acetyl phosphate + sulfite + H(+) = sulfoacetaldehyde + phosphate. It functions in the pathway organosulfur degradation; taurine degradation via aerobic pathway; acetyl phosphate and sulfite from taurine: step 2/2. In Castellaniella defragrans (Alcaligenes defragrans), this protein is Sulfoacetaldehyde acetyltransferase.